The following is an 89-amino-acid chain: UPF0213 protein LSEI_1587 (89 aa).

Residues 4-79 (KTYYFYVLLC…KHQTRHRKEV (76 aa)) enclose the GIY-YIG domain.

The protein belongs to the UPF0213 family.

This chain is UPF0213 protein LSEI_1587, found in Lacticaseibacillus paracasei (strain ATCC 334 / BCRC 17002 / CCUG 31169 / CIP 107868 / KCTC 3260 / NRRL B-441) (Lactobacillus paracasei).